A 199-amino-acid polypeptide reads, in one-letter code: Chaperone protein TorD (199 aa).

This sequence belongs to the TorD/DmsD family. TorD subfamily.

The protein localises to the cytoplasm. Its function is as follows. Involved in the biogenesis of TorA. Acts on TorA before the insertion of the molybdenum cofactor and, as a result, probably favors a conformation of the apoenzyme that is competent for acquiring the cofactor. In Escherichia coli O157:H7 (strain EC4115 / EHEC), this protein is Chaperone protein TorD.